The chain runs to 1040 residues: Tudor domain-containing protein 5 (1040 aa).

HTH OST-type domains are found at residues 7–80 (IQDC…KAIP), 122–197 (VPPI…LKKS), and 291–365 (VDPE…FDAD). The Tudor domain maps to 533–592 (FIQPGHLCCVKISEDKWWYRVIIHRILGKKEVEVFYPDFGNIGTVQKSSLRFLKCCYTKL). Position 809 is a phosphoserine (Ser-809). Disordered regions lie at residues 857–891 (DVKG…YPLD) and 912–975 (AERS…AKDK). Composition is skewed to polar residues over residues 872-891 (EKNT…YPLD) and 912-924 (AERS…SIQT). Ser-943 is subject to Phosphoserine. The segment covering 946-956 (NHSGSVESSPG) has biased composition (polar residues). Positions 958 to 975 (LKKEDVSNSRAEATAKDK) are enriched in basic and acidic residues.

This sequence belongs to the TDRD5 family. Gonad-specific. Mainly expressed in testis. Present at low level in ovary (at protein level).

The protein localises to the cytoplasm. Its function is as follows. Required during spermiogenesis to participate in the repression transposable elements and prevent their mobilization, which is essential for the germline integrity. Probably acts via the piRNA metabolic process, which mediates the repression of transposable elements during meiosis by forming complexes composed of piRNAs and Piwi proteins and govern the methylation and subsequent repression of transposons. Required for chromatoid body (CB) assembly. This is Tudor domain-containing protein 5 (Tdrd5) from Mus musculus (Mouse).